Consider the following 414-residue polypeptide: Tryptophan synthase beta chain (414 aa).

N6-(pyridoxal phosphate)lysine is present on Lys109.

The protein belongs to the TrpB family. Tetramer of two alpha and two beta chains. It depends on pyridoxal 5'-phosphate as a cofactor.

The catalysed reaction is (1S,2R)-1-C-(indol-3-yl)glycerol 3-phosphate + L-serine = D-glyceraldehyde 3-phosphate + L-tryptophan + H2O. Its pathway is amino-acid biosynthesis; L-tryptophan biosynthesis; L-tryptophan from chorismate: step 5/5. In terms of biological role, the beta subunit is responsible for the synthesis of L-tryptophan from indole and L-serine. This Prochlorococcus marinus (strain AS9601) protein is Tryptophan synthase beta chain.